The primary structure comprises 248 residues: Pulmonary surfactant-associated protein A (248 aa).

The N-terminal stretch at 1-20 is a signal peptide; it reads MLLCSLTLTLILLAVSGTKC. One can recognise a Collagen-like domain in the interval 31–100; the sequence is GVPGIPGSPG…PGERGPPGPP (70 aa). The interval 34-105 is disordered; the sequence is GIPGSPGLPG…PPGPPAYPDE (72 aa). The segment covering 54 to 65 has biased composition (pro residues); that stretch reads PGPPGPIGPPGG. The segment covering 84–93 has biased composition (basic and acidic residues); the sequence is ERGDKGEPGE. One can recognise a C-type lectin domain in the interval 134–247; it reads VGEKVFSTNG…CLQYRLAICE (114 aa). Cystine bridges form between cysteine 155-cysteine 246 and cysteine 224-cysteine 238. An N-linked (GlcNAc...) asparagine glycan is attached at asparagine 207. The Ca(2+) site is built by glutamate 215, arginine 217, asparagine 234, and aspartate 235.

Belongs to the SFTPA family. Oligomeric complex of 6 set of homotrimers.

It is found in the secreted. The protein localises to the extracellular space. The protein resides in the extracellular matrix. Its subcellular location is the surface film. Functionally, in presence of calcium ions, it binds to surfactant phospholipids and contributes to lower the surface tension at the air-liquid interface in the alveoli of the mammalian lung and is essential for normal respiration. Enhances the expression of MYO18A/SP-R210 on alveolar macrophages. In Equus caballus (Horse), this protein is Pulmonary surfactant-associated protein A (SFTPA1).